A 509-amino-acid polypeptide reads, in one-letter code: Heat shock 70 kDa protein 14 (509 aa).

This sequence belongs to the heat shock protein 70 family. As to quaternary structure, component of ribosome-associated complex (RAC), a heterodimer composed of Hsp70/DnaK-type chaperone HSPA14 and Hsp40/DnaJ-type chaperone DNAJC2.

Its subcellular location is the cytoplasm. It is found in the cytosol. Component of the ribosome-associated complex (RAC), a complex involved in folding or maintaining nascent polypeptides in a folding-competent state. In the RAC complex, binds to the nascent polypeptide chain, while DNAJC2 stimulates its ATPase activity. The sequence is that of Heat shock 70 kDa protein 14 (HSPA14) from Macaca fascicularis (Crab-eating macaque).